The sequence spans 379 residues: Glucose-1-phosphate adenylyltransferase (379 aa).

Alpha-D-glucose 1-phosphate-binding positions include Y99, G164, 179–180, and S190; that span reads EK.

This sequence belongs to the bacterial/plant glucose-1-phosphate adenylyltransferase family. Homotetramer.

It catalyses the reaction alpha-D-glucose 1-phosphate + ATP + H(+) = ADP-alpha-D-glucose + diphosphate. Its pathway is glycan biosynthesis; glycogen biosynthesis. In terms of biological role, involved in the biosynthesis of ADP-glucose, a building block required for the elongation reactions to produce glycogen. Catalyzes the reaction between ATP and alpha-D-glucose 1-phosphate (G1P) to produce pyrophosphate and ADP-Glc. The chain is Glucose-1-phosphate adenylyltransferase from Bacillus licheniformis (strain ATCC 14580 / DSM 13 / JCM 2505 / CCUG 7422 / NBRC 12200 / NCIMB 9375 / NCTC 10341 / NRRL NRS-1264 / Gibson 46).